Here is a 514-residue protein sequence, read N- to C-terminus: Voltage-gated potassium channel regulatory subunit KCNG1 (514 aa).

Residues 1–224 (MTLLPGDNSD…DMVEKPHSGL (224 aa)) lie on the Cytoplasmic side of the membrane. A compositionally biased stretch (acidic residues) spans 181–196 (EREDEEEALDSEDQES). Residues 181-205 (EREDEEEALDSEDQESEGPSTSEGR) form a disordered region. Residues 225-246 (PGKVFACLSVLFVTVTAVNLSV) form a helical membrane-spanning segment. The Extracellular segment spans residues 247 to 267 (STLPSLREEEEQGQCSQMCHN). A helical membrane pass occupies residues 268–289 (VFIVESVCVGWFSLEFLLRFIQ). The Cytoplasmic portion of the chain corresponds to 290-300 (APSKFAFLRSP). Residues 301–321 (LTLIDLVAILPYYVTLLVDGA) traverse the membrane as a helical segment. Over 322 to 338 (ASSRRKPSTGNSYLDKV) the chain is Extracellular. The helical; Voltage-sensor transmembrane segment at 339–359 (GLVLRVLRALRILYVMRLARH) threads the bilayer. Residues 360-374 (SLGLQTLGLTARRCT) lie on the Cytoplasmic side of the membrane. A helical membrane pass occupies residues 375–396 (REFGLLLLFLCVAIALFAPLLY). At 397–411 (VIENEMADSPEFTSI) the chain is on the extracellular side. The segment at residues 412 to 423 (PACYWWAVITMT) is an intramembrane region (helical). The short motif at 424-429 (TVGYGD) is the Selectivity filter element. An intramembrane segment occupies 424-431 (TVGYGDMV). The Extracellular portion of the chain corresponds to 432–438 (PRSTPGQ). Residues 439–467 (VVALSSILSGILLMAFPVTSIFHTFSRSY) form a helical membrane-spanning segment. Topologically, residues 468 to 514 (LELKQEQERVLIRRAQYLIKTKSQLSGMSQDSDILFGSASSDTRDNN) are cytoplasmic.

The protein belongs to the potassium channel family. G (TC 1.A.1.2) subfamily. Kv6.1/KCNG1 sub-subfamily. As to quaternary structure, heterotetramer with KCNB1 or KCNB2.

It localises to the cell membrane. Its function is as follows. Regulatory alpha-subunit of the voltage-gated potassium (Kv) channel which, when coassembled with KCNB1 or KCNB2, can modulate their expression and their gating kinetics by acting on deactivation upon repolarization and inactivation during maintained depolarization. Potassium channel subunit that does not form functional channels by itself. This is Voltage-gated potassium channel regulatory subunit KCNG1 from Rattus norvegicus (Rat).